Here is a 685-residue protein sequence, read N- to C-terminus: tRNA-dihydrouridine(47) synthase [NAD(P)(+)]-like (685 aa).

The span at 1–12 (MAATAAAAAAAP) shows a compositional bias: low complexity. Disordered stretches follow at residues 1–91 (MAAT…SSSH), 209–234 (AANDDKKVNHDNLDGNDDENKEPLCN), and 257–314 (LIDN…SCRT). Residues 13–29 (PADPPDSSPAASSPPRP) show a composition bias toward pro residues. The C3H1-type zinc finger occupies 87 to 118 (KSSSHLCIEVGKSGNVSSCKYGDSCRFSHDID). Basic and acidic residues-rich tracts occupy residues 209–221 (AANDDKKVNHDNL) and 273–284 (SKVESDEIDKHG). Residues 287-314 (TLNTNTESEDPNLSNGLEPSNNSSSCRT) are compositionally biased toward polar residues. FMN-binding positions include 338 to 340 (PLT) and Gln392. Cys423 serves as the catalytic Proton donor. FMN is bound by residues Lys462, His492, 525-527 (NGD), and 550-551 (AR).

This sequence belongs to the Dus family. Dus3 subfamily. FMN is required as a cofactor.

The catalysed reaction is 5,6-dihydrouridine(47) in tRNA + NAD(+) = uridine(47) in tRNA + NADH + H(+). It catalyses the reaction 5,6-dihydrouridine(47) in tRNA + NADP(+) = uridine(47) in tRNA + NADPH + H(+). The enzyme catalyses a 5,6-dihydrouridine in mRNA + NAD(+) = a uridine in mRNA + NADH + H(+). It carries out the reaction a 5,6-dihydrouridine in mRNA + NADP(+) = a uridine in mRNA + NADPH + H(+). Its function is as follows. Catalyzes the synthesis of dihydrouridine, a modified base found in the D-loop of most tRNAs. Specifically modifies U47 in cytoplasmic tRNAs. Catalyzes the synthesis of dihydrouridine in some mRNAs, thereby affecting their translation. This chain is tRNA-dihydrouridine(47) synthase [NAD(P)(+)]-like, found in Oryza sativa subsp. japonica (Rice).